The primary structure comprises 151 residues: Large ribosomal subunit protein bL9 (151 aa).

It belongs to the bacterial ribosomal protein bL9 family.

Its function is as follows. Binds to the 23S rRNA. The chain is Large ribosomal subunit protein bL9 from Francisella tularensis subsp. tularensis (strain FSC 198).